We begin with the raw amino-acid sequence, 502 residues long: Potassium channel KAT3 (502 aa).

The Cytoplasmic portion of the chain corresponds to 1–67 (MPRSSRMNLW…PYDPRYKVWE (67 aa)). A helical transmembrane segment spans residues 68–88 (TFLIILVVYSAWICPLEFAFL). The Extracellular portion of the chain corresponds to 89-95 (RYLPSAP). A helical membrane pass occupies residues 96 to 116 (FVVDDVVNGFFAVDIMLTFFV). Topologically, residues 117–138 (PFVDKKSYLLVNDPKKIAVRYL) are cytoplasmic. The helical transmembrane segment at 139–159 (SSWFVFDVCSTVPFHSISLLF) threads the bilayer. Residues 160 to 169 (NEHGHDLGFK) are Extracellular-facing. The helical; Voltage-sensor transmembrane segment at 170–190 (FLNVLRLWRLRRVSSMFARLE) threads the bilayer. The Cytoplasmic portion of the chain corresponds to 191-204 (KDIRFNYAVIRCTK). Residues 205–225 (LISVTLFAIHCAGCINYLIAD) form a helical membrane-spanning segment. Over 226 to 252 (RYPDPRRTWIGAVMPNFREDGLWIRYV) the chain is Extracellular. Positions 253–272 (TAMYWSITTLTTTGYGDLHA) form an intramembrane region, pore-forming. At 273–276 (ENAR) the chain is on the extracellular side. The helical transmembrane segment at 277–297 (EMLFGICYMLFNLWLTAYLIG) threads the bilayer. Over 298 to 502 (NMTNLVVHST…IRSNLQQVNV (205 aa)) the chain is Cytoplasmic. Residue 381-500 (LFKGVSSRFI…DIIRSNLQQV (120 aa)) coordinates a nucleoside 3',5'-cyclic phosphate.

It belongs to the potassium channel family. Plant (TC 1.A.1.4) subfamily.

Its subcellular location is the membrane. Functionally, probable inward-rectifying potassium channel. Assuming opened or closed conformations in response to the voltage difference across the membrane, the channel is activated by hyperpolarization. The protein is Potassium channel KAT3 of Oryza sativa subsp. japonica (Rice).